Reading from the N-terminus, the 921-residue chain is Isoleucine--tRNA ligase 1 (921 aa).

Positions 57-67 (PYANGDIHMGH) match the 'HIGH' region motif. Position 552 (glutamate 552) interacts with L-isoleucyl-5'-AMP. Residues 593–597 (KMSKS) carry the 'KMSKS' region motif. Lysine 596 lines the ATP pocket. Zn(2+) is bound by residues cysteine 888, cysteine 891, cysteine 908, and cysteine 911.

Belongs to the class-I aminoacyl-tRNA synthetase family. IleS type 1 subfamily. As to quaternary structure, monomer. Zn(2+) is required as a cofactor.

It is found in the cytoplasm. It catalyses the reaction tRNA(Ile) + L-isoleucine + ATP = L-isoleucyl-tRNA(Ile) + AMP + diphosphate. Catalyzes the attachment of isoleucine to tRNA(Ile). As IleRS can inadvertently accommodate and process structurally similar amino acids such as valine, to avoid such errors it has two additional distinct tRNA(Ile)-dependent editing activities. One activity is designated as 'pretransfer' editing and involves the hydrolysis of activated Val-AMP. The other activity is designated 'posttransfer' editing and involves deacylation of mischarged Val-tRNA(Ile). The sequence is that of Isoleucine--tRNA ligase 1 from Bacillus cereus (strain ATCC 10987 / NRS 248).